The chain runs to 99 residues: Integration host factor subunit alpha (99 aa).

Positions 49 to 71 (FGNFDLRDKNQRPGRNPKTGEDI) are disordered.

It belongs to the bacterial histone-like protein family. As to quaternary structure, heterodimer of an alpha and a beta chain.

In terms of biological role, this protein is one of the two subunits of integration host factor, a specific DNA-binding protein that functions in genetic recombination as well as in transcriptional and translational control. This is Integration host factor subunit alpha from Shewanella denitrificans (strain OS217 / ATCC BAA-1090 / DSM 15013).